A 352-amino-acid chain; its full sequence is Maleylacetate reductase (352 aa).

This sequence belongs to the iron-containing alcohol dehydrogenase family.

The catalysed reaction is 3-oxoadipate + NAD(+) = maleylacetate + NADH + H(+). The enzyme catalyses 3-oxoadipate + NADP(+) = maleylacetate + NADPH + H(+). It functions in the pathway aromatic compound metabolism; 3-chlorocatechol degradation. The chain is Maleylacetate reductase (clcE) from Pseudomonas knackmussii (strain DSM 6978 / CCUG 54928 / LMG 23759 / B13).